The chain runs to 876 residues: Paramyosin (876 aa).

The nonhelical region stretch occupies residues methionine 1–aspartate 28. A coiled-coil region spans residues leucine 29–threonine 855. Residues threonine 856–tyrosine 876 form a nonhelical region region.

It belongs to the paramyosin family. In terms of assembly, homodimer.

It localises to the cytoplasm. Its subcellular location is the myofibril. Functionally, paramyosin is a major structural component of many thick filaments isolated from invertebrate muscles. This Sarcoptes scabiei (Itch mite) protein is Paramyosin.